The chain runs to 516 residues: 3-phosphoshikimate 1-carboxyvinyltransferase, chloroplastic (516 aa).

The N-terminal 72 residues, Met-1–Glu-72, are a transit peptide targeting the chloroplast. 3-phosphoshikimate-binding residues include Lys-95, Ser-96, and Arg-100. Residue Lys-95 coordinates phosphoenolpyruvate. 2 residues coordinate phosphoenolpyruvate: Gly-173 and Arg-203. Ser-250, Ser-251, Gln-252, Ser-278, Asp-403, and Lys-430 together coordinate 3-phosphoshikimate. Phosphoenolpyruvate is bound at residue Gln-252. Asp-403 serves as the catalytic Proton acceptor. The phosphoenolpyruvate site is built by Arg-434, Arg-476, and Lys-501.

Belongs to the EPSP synthase family.

It localises to the plastid. The protein resides in the chloroplast. It carries out the reaction 3-phosphoshikimate + phosphoenolpyruvate = 5-O-(1-carboxyvinyl)-3-phosphoshikimate + phosphate. Its pathway is metabolic intermediate biosynthesis; chorismate biosynthesis; chorismate from D-erythrose 4-phosphate and phosphoenolpyruvate: step 6/7. Catalyzes the transfer of the enolpyruvyl moiety of phosphoenolpyruvate (PEP) to the 5-hydroxyl of shikimate-3-phosphate (S3P) to produce enolpyruvyl shikimate-3-phosphate and inorganic phosphate. The chain is 3-phosphoshikimate 1-carboxyvinyltransferase, chloroplastic from Brassica napus (Rape).